Reading from the N-terminus, the 523-residue chain is Ribonuclease Y (523 aa).

The chain crosses the membrane as a helical span at residues T28 to I48. Residues T227–V312 form the KH domain. One can recognise an HD domain in the interval V353–A446.

The protein belongs to the RNase Y family.

Its subcellular location is the cell membrane. Its function is as follows. Endoribonuclease that initiates mRNA decay. This chain is Ribonuclease Y, found in Clostridium tetani (strain Massachusetts / E88).